A 375-amino-acid chain; its full sequence is Dual specificity protein phosphatase 4 (375 aa).

Residues 25–143 (SGGRCLLLDC…FASEYPEFCA (119 aa)) enclose the Rhodanese domain. A Tyrosine-protein phosphatase domain is found at 176–317 (GPVEILPFLY…LLQFESQVLA (142 aa)). Cys261 (phosphocysteine intermediate) is an active-site residue.

Belongs to the protein-tyrosine phosphatase family. Non-receptor class dual specificity subfamily.

Its subcellular location is the nucleus. It catalyses the reaction O-phospho-L-tyrosyl-[protein] + H2O = L-tyrosyl-[protein] + phosphate. It carries out the reaction O-phospho-L-seryl-[protein] + H2O = L-seryl-[protein] + phosphate. The catalysed reaction is O-phospho-L-threonyl-[protein] + H2O = L-threonyl-[protein] + phosphate. Functionally, regulates mitogenic signal transduction by dephosphorylating both Thr and Tyr residues on MAP kinases ERK1 and ERK2. In Gallus gallus (Chicken), this protein is Dual specificity protein phosphatase 4 (DUSP4).